Here is a 206-residue protein sequence, read N- to C-terminus: uncharacterized protein (206 aa).

The helical transmembrane segment at 166–186 threads the bilayer; sequence FYTGLSVIVGGATALALGLFF.

It is found in the membrane. This is an uncharacterized protein from Dictyostelium discoideum (Social amoeba).